The chain runs to 557 residues: MAAQGFLLIATFLLVLMVLARPLGSGLARLINDIPLPGTTGVERVLFRALGVSDREMNWKQYLCAILGLNMLGLAVLFFMLLGQHYLPLNPQQLPGLSWDLALNTAVSFVTNTNWQSYSGETTLSYFSQMAGLTVQNFLSAASGIAVIFALIRAFTRQSMSTLGNAWVDLLRITLWVLVPVALLIALFFIQQGALQNFQPYQAVNTVEGAQQLLPMGPVASQEAIKMLGTNGGGFFNANSSHPFENPTALTNFVQMLAIFLIPTALCFAFGEVTGDRRQGRMLLWAMSVIFVICVGVVMWAEVQGNPHLLALGADSSINMEGKESRFGVLVSSLFAVVTTAASCGAVIAMHDSFTALGGMVPMWLMQIGEVVFGGVGSGLYGMMLFVLLAVFIAGLMIGRTPEYLGKKIDVREMKLTALAILVTPTLVLMGAALAMMTDAGRSAMLNPGPHGFSEVLYAVSSAANNNGSAFAGLSANSPFWNCLLAFCMFVGRFGVIIPVMAIAGSLVSKKSQPASSGTLPTHGPLFVGLLIGTVLLVGALTFIPALALGPVAEYLS.

A run of 12 helical transmembrane segments spans residues 5-25, 63-83, 132-152, 170-190, 253-273, 283-303, 329-349, 356-376, 379-399, 416-436, 484-504, and 526-546; these read GFLLIATFLLVLMVLARPLGS, LCAILGLNMLGLAVLFFMLLG, GLTVQNFLSAASGIAVIFALI, LLRITLWVLVPVALLIALFFI, FVQMLAIFLIPTALCFAFGEV, LLWAMSVIFVICVGVVMWAEV, VLVSSLFAVVTTAASCGAVIA, ALGGMVPMWLMQIGEVVFGGV, GLYGMMLFVLLAVFIAGLMIG, LTALAILVTPTLVLMGAALAM, LLAFCMFVGRFGVIIPVMAIA, and LFVGLLIGTVLLVGALTFIPA.

This sequence belongs to the KdpA family. In terms of assembly, the system is composed of three essential subunits: KdpA, KdpB and KdpC.

The protein resides in the cell inner membrane. Functionally, part of the high-affinity ATP-driven potassium transport (or Kdp) system, which catalyzes the hydrolysis of ATP coupled with the electrogenic transport of potassium into the cytoplasm. This subunit binds the periplasmic potassium ions and delivers the ions to the membrane domain of KdpB through an intramembrane tunnel. This chain is Potassium-transporting ATPase potassium-binding subunit, found in Escherichia coli (strain SE11).